We begin with the raw amino-acid sequence, 65 residues long: Large ribosomal subunit protein bL33c (65 aa).

The protein belongs to the bacterial ribosomal protein bL33 family.

It is found in the plastid. It localises to the chloroplast. This Zygnema circumcarinatum (Green alga) protein is Large ribosomal subunit protein bL33c.